Here is a 798-residue protein sequence, read N- to C-terminus: Sodium/hydrogen exchanger 4 (798 aa).

The Cytoplasmic segment spans residues 1 to 13; it reads MALQMFVTYSPWN. The segment at residues 14 to 28 is an intramembrane region (name=A/M1); it reads CLLLLVALECSEASS. Over 29–69 the chain is Cytoplasmic; it reads DLNESANSTAQYASNAWFAAASSEPEEGISVFELDYDYVQI. Positions 70–90 form an intramembrane region, name=B/M2; that stretch reads PYEVTLWILLASLAKIGFHLY. Over 91–94 the chain is Cytoplasmic; it reads HRLP. A helical membrane pass occupies residues 95–115; that stretch reads GLMPESCLLILVGALVGGIIF. The Extracellular portion of the chain corresponds to 116–127; it reads GTDHKSPPVMDS. The chain crosses the membrane as a helical span at residues 128-148; that stretch reads SIYFLYLLPPIVLEGGYFMPT. The Cytoplasmic portion of the chain corresponds to 149–154; sequence RPFFEN. Residues 155–175 form a helical membrane-spanning segment; that stretch reads IGSILWWAVLGALINALGIGL. At 176 to 196 the chain is on the extracellular side; sequence SLYLICQVKAFGLGDVNLLQN. A helical transmembrane segment spans residues 197 to 217; the sequence is LLFGSLISAVDPVAVLAVFEE. The Cytoplasmic segment spans residues 218–226; it reads ARVNEQLYM. The helical transmembrane segment at 227–247 threads the bilayer; that stretch reads MIFGEALLNDGITVVLYNMLI. The Extracellular segment spans residues 248–270; it reads AFTKMHKFEDIETVDILAGCARF. The helical transmembrane segment at 271–291 threads the bilayer; the sequence is IVVGLGGVLFGIVFGFISAFI. The Cytoplasmic segment spans residues 292–304; it reads TRFTQNISAIEPL. A helical membrane pass occupies residues 305-325; it reads IVFMFSYLSYLAAETLYLSGI. Topologically, residues 326–356 are extracellular; that stretch reads LAITACAVTMKKYVEENVSQTSYTTIKYFMK. Residue Asn342 is glycosylated (N-linked (GlcNAc...) asparagine). The chain crosses the membrane as a helical span at residues 357–373; the sequence is MLSSVSETLIFIFMGVS. Over 374 to 384 the chain is Cytoplasmic; sequence TVGKNHEWNWA. A helical transmembrane segment spans residues 385–405; that stretch reads FICFTLAFCQIWRAISVFALF. Residues 406-420 are Extracellular-facing; that stretch reads YISNQFRTFPFSIKD. The segment at residues 421–441 is an intramembrane region (name=L); the sequence is QCIIFYSGVRGAGSFSLAFLL. The Extracellular segment spans residues 442-450; sequence PLSLFPRKK. A helical transmembrane segment spans residues 451–471; sequence MFVTATLVVIYFTVFIQGITV. The Cytoplasmic segment spans residues 472–798; the sequence is GPLVRYLDVK…RSHSPLLQKK (327 aa). 2 disordered regions span residues 662–690 and 776–798; these read PYGNPQSAGRDTRAAGFSDDDSSDPGSPS and RWTADHGHGRDHHRSHSPLLQKK. The segment covering 784–798 has biased composition (basic residues); the sequence is GRDHHRSHSPLLQKK.

Belongs to the monovalent cation:proton antiporter 1 (CPA1) transporter (TC 2.A.36) family. As to quaternary structure, homodimer; each protomer has one site for sodium and one site for proton binding. Interacts with CHP1 and CHP2. Post-translationally, may be phosphorylated.

It is found in the basolateral cell membrane. The protein localises to the apical cell membrane. The protein resides in the zymogen granule membrane. The catalysed reaction is Na(+)(in) + H(+)(out) = Na(+)(out) + H(+)(in). It catalyses the reaction Na(+)(out) + NH4(+)(in) = Na(+)(in) + NH4(+)(out). Electroneutral antiporter that exchanges sodium for protons or ammonium ions at the basolateral membrane of epithelia to regulate cell volume and intracellular pH upon hypertonic conditions. As part of transcellular ammonia transport in renal tubules, mediates basolateral ammonium extrusion in the medullary thick ascending limb, regulating the corticopapillary ammonium gradient and overall renal acid excretion. Mediates sodium:proton exchange in gastric parietal cells secondary to cAMP-dependent acid secretion and hyperosmolarity. Possibly coupled to chloride:bicarbonate antiporter, enables loading of parietal cells with sodium and chloride ions to maintain cell volume and normal gastric acid secretion. Functions as a sodium sensor in neurons of organum vasculosum of the lamina terminalis where it regulates water intake in response to increased sodium concentration in body fluids. This Homo sapiens (Human) protein is Sodium/hydrogen exchanger 4 (SLC9A4).